Reading from the N-terminus, the 95-residue chain is Acylphosphatase (95 aa).

Residues 7-95 enclose the Acylphosphatase-like domain; sequence RLTAWVLGTV…PKGEVGFRTR (89 aa). Catalysis depends on residues arginine 22 and asparagine 40.

Belongs to the acylphosphatase family.

The catalysed reaction is an acyl phosphate + H2O = a carboxylate + phosphate + H(+). This chain is Acylphosphatase (acyP), found in Corynebacterium diphtheriae (strain ATCC 700971 / NCTC 13129 / Biotype gravis).